The chain runs to 237 residues: UDP-2,3-diacylglucosamine hydrolase (237 aa).

The Mn(2+) site is built by Asp-9, His-11, Asp-42, Asn-80, and His-115. Position 80–81 (80–81) interacts with substrate; it reads NR. Residues Asp-123, Ser-161, Lys-165, Lys-168, and His-196 each coordinate substrate. Positions 196 and 198 each coordinate Mn(2+).

Belongs to the LpxH family. The cofactor is Mn(2+).

It localises to the cell inner membrane. The protein resides in the cytoplasm. The catalysed reaction is UDP-2-N,3-O-bis[(3R)-3-hydroxytetradecanoyl]-alpha-D-glucosamine + H2O = 2-N,3-O-bis[(3R)-3-hydroxytetradecanoyl]-alpha-D-glucosaminyl 1-phosphate + UMP + 2 H(+). The protein operates within glycolipid biosynthesis; lipid IV(A) biosynthesis; lipid IV(A) from (3R)-3-hydroxytetradecanoyl-[acyl-carrier-protein] and UDP-N-acetyl-alpha-D-glucosamine: step 4/6. In terms of biological role, hydrolyzes the pyrophosphate bond of UDP-2,3-diacylglucosamine to yield 2,3-diacylglucosamine 1-phosphate (lipid X) and UMP by catalyzing the attack of water at the alpha-P atom. Involved in the biosynthesis of lipid A, a phosphorylated glycolipid that anchors the lipopolysaccharide to the outer membrane of the cell. The sequence is that of UDP-2,3-diacylglucosamine hydrolase from Haemophilus influenzae (strain ATCC 51907 / DSM 11121 / KW20 / Rd).